Here is a 208-residue protein sequence, read N- to C-terminus: Probable nicotinate-nucleotide adenylyltransferase (208 aa).

The protein belongs to the NadD family.

The enzyme catalyses nicotinate beta-D-ribonucleotide + ATP + H(+) = deamido-NAD(+) + diphosphate. It participates in cofactor biosynthesis; NAD(+) biosynthesis; deamido-NAD(+) from nicotinate D-ribonucleotide: step 1/1. Its function is as follows. Catalyzes the reversible adenylation of nicotinate mononucleotide (NaMN) to nicotinic acid adenine dinucleotide (NaAD). The chain is Probable nicotinate-nucleotide adenylyltransferase from Acidothermus cellulolyticus (strain ATCC 43068 / DSM 8971 / 11B).